The primary structure comprises 419 residues: Imidazolonepropionase (419 aa).

Fe(3+) contacts are provided by His84 and His86. Zn(2+)-binding residues include His84 and His86. Residues Arg93, Tyr156, and His189 each contribute to the 4-imidazolone-5-propanoate site. Tyr156 is an N-formimidoyl-L-glutamate binding site. Residue His254 participates in Fe(3+) binding. His254 serves as a coordination point for Zn(2+). Residue Gln257 coordinates 4-imidazolone-5-propanoate. Residue Asp329 participates in Fe(3+) binding. Asp329 is a Zn(2+) binding site. Positions 331 and 333 each coordinate N-formimidoyl-L-glutamate. Residue Thr334 participates in 4-imidazolone-5-propanoate binding.

This sequence belongs to the metallo-dependent hydrolases superfamily. HutI family. Monomer. Forms a tightly packed homodimer in the crystal, but this seems to be an artifact of crystallization. The cofactor is Zn(2+). Fe(3+) serves as cofactor.

It is found in the cytoplasm. It catalyses the reaction 4-imidazolone-5-propanoate + H2O = N-formimidoyl-L-glutamate. It participates in amino-acid degradation; L-histidine degradation into L-glutamate; N-formimidoyl-L-glutamate from L-histidine: step 3/3. Functionally, catalyzes the hydrolytic cleavage of the carbon-nitrogen bond in imidazolone-5-propanoate to yield N-formimidoyl-L-glutamate. It is the third step in the universal histidine degradation pathway. This is Imidazolonepropionase from Agrobacterium fabrum (strain C58 / ATCC 33970) (Agrobacterium tumefaciens (strain C58)).